The following is a 1430-amino-acid chain: Death-associated protein kinase 1 (1430 aa).

Residues 13 to 275 enclose the Protein kinase domain; it reads YDTGEELGSG…IQDSLQHPWI (263 aa). ATP contacts are provided by residues 19-27, lysine 42, 94-96, and glutamate 100; these read LGSGQFAVV and ELV. Aspartate 139 acts as the Proton acceptor in catalysis. Aspartate 161 contributes to the ATP binding site. The interval 267–334 is calmodulin-binding; it reads QDSLQHPWIK…RSNMSVARSD (68 aa). At serine 289 the chain carries Phosphoserine; by RPS6KA1 and RPS6KA3. The tract at residues 292–301 is autoinhibitory domain; it reads NMEKFKKFAA. At serine 308 the chain carries Phosphoserine; by autocatalysis. 2 positions are modified to phosphoserine: serine 319 and serine 333. ANK repeat units lie at residues 378–407, 411–440, 444–473, 477–506, 510–539, 543–572, 576–605, and 609–638; these read HGTP…RIDV, GGSN…PLDV, SGEM…NPNI, EEET…NVNI, EGET…DLNA, DGHI…FVDY, HGNT…NLDI, and YGRT…SVEA. The region spanning 681 to 955 is the Roc domain; sequence TQNLQPRIKL…NHLQEIRSQI (275 aa). Position 734 is a phosphoserine; by MAPK1 (serine 734). The ANK 9 repeat unit spans residues 875-904; the sequence is KLKNPLQVVLVATHADIMNVPRPAGGEFGY. The residue at position 1115 (serine 1115) is a Phosphoserine. An ANK 10 repeat occupies 1162 to 1196; sequence EGDADIRLWVNGCKLANRGAELLVLLVNHGQGIEV. One can recognise a Death domain in the interval 1312–1396; the sequence is KLSRLLDPPD…DAADFLLKAS (85 aa).

It belongs to the protein kinase superfamily. CAMK Ser/Thr protein kinase family. DAP kinase subfamily. Interacts with KLHL20. Interacts (via death domain) with MAPK1 and MAPK3. Interacts with MAP1B (via N-terminus). Interacts with PRKD1 in an oxidative stress-regulated manner. Interacts with PIN1, PDCD6, BECN1, TSC2 and STX1A. Interacts (via kinase domain) with DAPK3 (via kinase domain). Interacts with GRINB. Interacts (via death domain) with UNC5B (via death domain). Interacts with UNC5C (via death domain). Requires Mg(2+) as cofactor. Post-translationally, ubiquitinated by the BCR(KLHL20) E3 ubiquitin ligase complex, leading to its degradation by the proteasome. Removal of the C-terminal tail of isoform 2 (corresponding to amino acids 296-337 of isoform 2) by proteolytic cleavage stimulates maximally its membrane-blebbing function. In terms of processing, in response to mitogenic stimulation (PMA or EGF), phosphorylated at Ser-289; phosphorylation suppresses DAPK1 pro-apoptotic function. Autophosphorylation at Ser-308 inhibits its catalytic activity. Phosphorylation at Ser-734 by MAPK1 increases its catalytic activity and promotes cytoplasmic retention of MAPK1. Endoplasmic-stress can cause dephosphorylation at Ser-308. As to expression, isoform 2 is expressed in normal intestinal tissue as well as in colorectal carcinomas.

It localises to the cytoplasm. Its subcellular location is the cytoskeleton. The catalysed reaction is L-seryl-[protein] + ATP = O-phospho-L-seryl-[protein] + ADP + H(+). It catalyses the reaction L-threonyl-[protein] + ATP = O-phospho-L-threonyl-[protein] + ADP + H(+). With respect to regulation, activated by Ca(2+)/calmodulin. Regulated by a locking mechanism, involving autophosphorylation at Ser-308 and calmodulin binding. In the inactive state, Ser-308 is phosphorylated. Activation involves its dephosphorylation and a release-of-autoinhibition mechanism where binding of calmodulin induces a conformational change that relieves the steric block of the active site by the autoinhibitory domain. Activity is modulated by UNC5B and NTN1. UNC5B activates it by inhibiting the phosphorylation at Ser-308, whereas NTN1 inhibits UNC5B-mediated activation of DAPK1. Endoplasmic-stress activates by causing Ser-308 dephosphorylation. Functionally, calcium/calmodulin-dependent serine/threonine kinase involved in multiple cellular signaling pathways that trigger cell survival, apoptosis, and autophagy. Regulates both type I apoptotic and type II autophagic cell deaths signal, depending on the cellular setting. The former is caspase-dependent, while the latter is caspase-independent and is characterized by the accumulation of autophagic vesicles. Phosphorylates PIN1 resulting in inhibition of its catalytic activity, nuclear localization, and cellular function. Phosphorylates TPM1, enhancing stress fiber formation in endothelial cells. Phosphorylates STX1A and significantly decreases its binding to STXBP1. Phosphorylates PRKD1 and regulates JNK signaling by binding and activating PRKD1 under oxidative stress. Phosphorylates BECN1, reducing its interaction with BCL2 and BCL2L1 and promoting the induction of autophagy. Phosphorylates TSC2, disrupting the TSC1-TSC2 complex and stimulating mTORC1 activity in a growth factor-dependent pathway. Phosphorylates RPS6, MYL9 and DAPK3. Acts as a signaling amplifier of NMDA receptors at extrasynaptic sites for mediating brain damage in stroke. Cerebral ischemia recruits DAPK1 into the NMDA receptor complex and it phosphorylates GRINB at Ser-1303 inducing injurious Ca(2+) influx through NMDA receptor channels, resulting in an irreversible neuronal death. Required together with DAPK3 for phosphorylation of RPL13A upon interferon-gamma activation which is causing RPL13A involvement in transcript-selective translation inhibition. In terms of biological role, isoform 2 cannot induce apoptosis but can induce membrane blebbing. The chain is Death-associated protein kinase 1 (DAPK1) from Homo sapiens (Human).